The sequence spans 597 residues: Probable translation initiation factor IF-2 (597 aa).

A tr-type G domain is found at 4-221; it reads IRQPIIAVLG…LIAGLSQKYL (218 aa). The segment at 13-20 is G1; sequence GHVDHGKT. 13-20 contributes to the GTP binding site; sequence GHVDHGKT. Residues 38-42 form a G2 region; sequence GITQH. The segment at 77–80 is G3; the sequence is DTPG. Residues 77–81 and 131–134 each bind GTP; these read DTPGH and NKID. The interval 131-134 is G4; sequence NKID. The interval 199–201 is G5; sequence SAK.

It belongs to the TRAFAC class translation factor GTPase superfamily. Classic translation factor GTPase family. IF-2 subfamily.

Functionally, function in general translation initiation by promoting the binding of the formylmethionine-tRNA to ribosomes. Seems to function along with eIF-2. This Thermococcus onnurineus (strain NA1) protein is Probable translation initiation factor IF-2.